A 154-amino-acid chain; its full sequence is MDARMFGLETPRVAALHHLLDVPDGDKAGGGATRTYVRDARAMAATPADVKELAGAYAFVVDMPGLSTGDIRVQVEDERVLVISGERRREEREDAKYLRMERRMGKFMRKFVLPDNADVDKVAAVCRDGVLTVTVEKLPPPEPKKPKTIEIKVA.

The sHSP domain maps to 39-154 (DARAMAATPA…KPKTIEIKVA (116 aa)).

This sequence belongs to the small heat shock protein (HSP20) family.

The protein resides in the cytoplasm. In Zea mays (Maize), this protein is 17.0 kDa class II heat shock protein (HSP18).